A 121-amino-acid chain; its full sequence is Small ribosomal subunit protein uS13 (121 aa).

A disordered region spans residues 94 to 121; sequence GLPVRGQNTKNNARTRKGPRRTVANKKK. The segment covering 106–121 has biased composition (basic residues); it reads ARTRKGPRRTVANKKK.

This sequence belongs to the universal ribosomal protein uS13 family. Part of the 30S ribosomal subunit. Forms a loose heterodimer with protein S19. Forms two bridges to the 50S subunit in the 70S ribosome.

Functionally, located at the top of the head of the 30S subunit, it contacts several helices of the 16S rRNA. In the 70S ribosome it contacts the 23S rRNA (bridge B1a) and protein L5 of the 50S subunit (bridge B1b), connecting the 2 subunits; these bridges are implicated in subunit movement. Contacts the tRNAs in the A and P-sites. The chain is Small ribosomal subunit protein uS13 from Geobacillus kaustophilus (strain HTA426).